We begin with the raw amino-acid sequence, 341 residues long: Putative MAGE domain-containing protein MAGEA13P (341 aa).

Disordered regions lie at residues 1–21 and 78–101; these read MPHS…APKE and KATP…GASQ. Residues 87–97 show a composition bias toward basic and acidic residues; the sequence is ESSRSQEKKDP. The MAGE domain occupies 105–304; the sequence is LEKKVDELVK…SSFPLLYEEA (200 aa).

The chain is Putative MAGE domain-containing protein MAGEA13P (MAGEA13P) from Homo sapiens (Human).